The primary structure comprises 218 residues: Octanoyltransferase (218 aa).

The BPL/LPL catalytic domain maps to 31-206 (EETPDEVWLV…ELVNLLGYEQ (176 aa)). Substrate is bound by residues 70–77 (RGGQVTYH), 137–139 (SLG), and 150–152 (GLA). Cys-168 (acyl-thioester intermediate) is an active-site residue.

The protein belongs to the LipB family.

It is found in the cytoplasm. The catalysed reaction is octanoyl-[ACP] + L-lysyl-[protein] = N(6)-octanoyl-L-lysyl-[protein] + holo-[ACP] + H(+). Its pathway is protein modification; protein lipoylation via endogenous pathway; protein N(6)-(lipoyl)lysine from octanoyl-[acyl-carrier-protein]: step 1/2. Its function is as follows. Catalyzes the transfer of endogenously produced octanoic acid from octanoyl-acyl-carrier-protein onto the lipoyl domains of lipoate-dependent enzymes. Lipoyl-ACP can also act as a substrate although octanoyl-ACP is likely to be the physiological substrate. The protein is Octanoyltransferase of Vibrio vulnificus (strain CMCP6).